The following is a 281-amino-acid chain: Probable feruloyl esterase A (281 aa).

The N-terminal stretch at 1–21 (MKQFSAKYALILLATAGQALA) is a signal peptide. Disulfide bonds link cysteine 50–cysteine 279, cysteine 112–cysteine 115, and cysteine 248–cysteine 255. Aspartate 98 serves as a coordination point for substrate. Asparagine 100 carries an N-linked (GlcNAc...) asparagine glycan. Tyrosine 101 is a binding site for substrate. Serine 154 (nucleophile) is an active-site residue. Aspartate 215 serves as the catalytic Charge relay system. Substrate is bound at residue histidine 268. Histidine 268 acts as the Charge relay system in catalysis.

It belongs to the AB hydrolase superfamily. FaeA family.

It is found in the secreted. The enzyme catalyses feruloyl-polysaccharide + H2O = ferulate + polysaccharide.. In terms of biological role, involved in degradation of plant cell walls. Hydrolyzes the feruloyl-arabinose ester bond in arabinoxylans, and the feruloyl-galactose ester bond in pectin. The chain is Probable feruloyl esterase A (faeA) from Aspergillus niger (strain ATCC MYA-4892 / CBS 513.88 / FGSC A1513).